Here is a 2463-residue protein sequence, read N- to C-terminus: Protein TIC 214 (2463 aa).

6 helical membrane passes run 18-38 (VGLYYGFISAFSIGSSYLFLL), 60-80 (FFTGQLLIFISILYGPLHLAL), 86-106 (ILLLLAPYFFFHYLFSNSGQW), 127-147 (LVFLNNLLFQLFSLSLLGRPM), 170-190 (FVGWLIGHILVLKWAGLVFVW), and 297-317 (LFSIILFAIFLLYLDQTPLLY). Residues 326 to 441 (QLQRKLSNET…AARAMQEAYK (116 aa)) adopt a coiled-coil conformation. 5 disordered regions span residues 792-841 (AVPK…RKVN), 1230-1249 (SIQKDPKKEKDPKKEKGPKK), 1393-1417 (SGGRETPEFTRSQKDIDNLKNEQDF), 2116-2136 (EEEKIEKEKRKKERKKEKLKK), and 2162-2187 (KQRAKNIARMEEEDKKARKKRKRKVQ). Basic residues predominate over residues 794 to 830 (PKKKKKISKSKQKNVKSKQKNVKSKQKNVKSKQKNVK). Composition is skewed to basic and acidic residues over residues 832–841 (KQNEIKRKVN), 1231–1249 (IQKDPKKEKDPKKEKGPKK), and 1397–1417 (ETPEFTRSQKDIDNLKNEQDF). A coiled-coil region spans residues 2049–2192 (WDALVASLKQ…KRKVQVQENK (144 aa)). The span at 2124–2136 (KRKKERKKEKLKK) shows a compositional bias: basic residues.

Belongs to the TIC214 family. As to quaternary structure, part of the Tic complex.

It is found in the plastid. Its subcellular location is the chloroplast inner membrane. Its function is as follows. Involved in protein precursor import into chloroplasts. May be part of an intermediate translocation complex acting as a protein-conducting channel at the inner envelope. The protein is Protein TIC 214 of Oenothera elata subsp. hookeri (Hooker's evening primrose).